The primary structure comprises 2799 residues: Peramine synthetase ppzA (2799 aa).

Positions 270-666 (QERCRLQPNA…VGRKDTQVKI (397 aa)) are adenylation 1. The Carrier 1 domain maps to 799-875 (QPLTGMERLL…DLSRQSRYIE (77 aa)). Position 836 is an O-(pantetheine 4'-phosphoryl)serine (S836). The tract at residues 914 to 1327 (DAYPCTPLQE…ITILTTEDLE (414 aa)) is condensation. An adenylation 2 region spans residues 1350-1743 (DKVQARPNAP…TLSFVRRKDT (394 aa)). A methylation (Met) domain region spans residues 1874–1970 (LEIGCGSGMM…EYLVKLIQDI (97 aa)). A Carrier 2 domain is found at 2290–2368 (SPTTDMEKEL…RLLLDCCCDD (79 aa)). S2327 is subject to O-(pantetheine 4'-phosphoryl)serine. Residues 2420–2737 (TVLLTGANGF…LADMLQDLED (318 aa)) form a thiesterase (TE) domain region.

The protein belongs to the NRP synthetase family. Pantetheine 4'-phosphate serves as cofactor.

The enzyme catalyses (S)-1-pyrroline-5-carboxylate + L-arginine + S-adenosyl-L-methionine + 2 ATP = peramine + 2 AMP + S-adenosyl-L-homocysteine + 2 diphosphate + H2O + 2 H(+). The protein operates within secondary metabolite biosynthesis. Functionally, nonribosomal peptide synthetase; part of the gene cluster that mediates the biosynthesis of pyrrolopyrazines, secondary metabolites showing insecticidal activity. The single multifunctional NRPS ppzA is responsible for the biosynthesis of peramine. The condensation domain of ppzA is proposed to catalyze formation of a peptide bond between 1-pyrroline-5-carboxylate and arginine. The methylation domain of ppzA would catalyze the N-methylation of the alpha-amino group of arginine. The reductase domain is proposed to be responsible for reduction of the thioester and the cyclization to form an iminium ion resulting in release from the peptide synthetase. Deprotonation of this intermediate and oxidation of the pyrroline ring would give rise to peramine. This final oxidation to give the pyrrole functionality may be spontaneous. In Epichloe species that produce only peramine, the peramine synthetase gene is not localized in a gene cluster, in contrast to Metarhizium species that contain additional pyrrolopyrazine biosynthesis genes. The 2-oxoglutarate-Fe(II) type oxidoreductase ppzC hydroxylates peramine to yield the newly identified compound 8-hydroxyperamine whereas ppzD converts L-proline into trans-4-hydroxy-L-proline, a precursor of peramine biosynthesis. The protein is Peramine synthetase ppzA of Metarhizium majus (strain ARSEF 297).